Here is an 84-residue protein sequence, read N- to C-terminus: Large ribosomal subunit protein eL34 (84 aa).

It belongs to the eukaryotic ribosomal protein eL34 family.

In Pyrobaculum calidifontis (strain DSM 21063 / JCM 11548 / VA1), this protein is Large ribosomal subunit protein eL34.